Reading from the N-terminus, the 332-residue chain is Probable allantoicase (332 aa).

The protein belongs to the allantoicase family.

The enzyme catalyses allantoate + H2O = (S)-ureidoglycolate + urea. The protein operates within nitrogen metabolism; (S)-allantoin degradation; (S)-ureidoglycolate from allantoate (aminidohydrolase route): step 1/1. In Pseudomonas aeruginosa (strain UCBPP-PA14), this protein is Probable allantoicase.